A 545-amino-acid polypeptide reads, in one-letter code: Methionine--tRNA ligase (545 aa).

Positions 15–25 match the 'HIGH' region motif; the sequence is PYANGPIHLGH. Zn(2+) is bound by residues cysteine 146, cysteine 149, cysteine 159, and cysteine 162. The short motif at 332 to 336 is the 'KMSKS' region element; the sequence is KMSKS. Lysine 335 lines the ATP pocket.

Belongs to the class-I aminoacyl-tRNA synthetase family. MetG type 1 subfamily. As to quaternary structure, monomer. The cofactor is Zn(2+).

It localises to the cytoplasm. It carries out the reaction tRNA(Met) + L-methionine + ATP = L-methionyl-tRNA(Met) + AMP + diphosphate. Is required not only for elongation of protein synthesis but also for the initiation of all mRNA translation through initiator tRNA(fMet) aminoacylation. This Hamiltonella defensa subsp. Acyrthosiphon pisum (strain 5AT) protein is Methionine--tRNA ligase.